The primary structure comprises 602 residues: Threonine--tRNA ligase (602 aa).

A catalytic region spans residues 208 to 499; the sequence is DHRKLGTELK…LTEHCAGEFP (292 aa). The Zn(2+) site is built by Cys-300, His-351, and His-476.

This sequence belongs to the class-II aminoacyl-tRNA synthetase family. As to quaternary structure, homodimer. Zn(2+) serves as cofactor.

Its subcellular location is the cytoplasm. The enzyme catalyses tRNA(Thr) + L-threonine + ATP = L-threonyl-tRNA(Thr) + AMP + diphosphate + H(+). Its function is as follows. Catalyzes the attachment of threonine to tRNA(Thr) in a two-step reaction: L-threonine is first activated by ATP to form Thr-AMP and then transferred to the acceptor end of tRNA(Thr). Also edits incorrectly charged L-seryl-tRNA(Thr). This chain is Threonine--tRNA ligase, found in Campylobacter jejuni subsp. jejuni serotype O:23/36 (strain 81-176).